The chain runs to 206 residues: Large ribosomal subunit protein uL3 (206 aa).

The segment at 116–149 is disordered; that stretch reads GFQGAIKRHNQSRGPMSHGSRYHRRPGSMGPVAP.

This sequence belongs to the universal ribosomal protein uL3 family. In terms of assembly, part of the 50S ribosomal subunit. Forms a cluster with proteins L14 and L19.

Functionally, one of the primary rRNA binding proteins, it binds directly near the 3'-end of the 23S rRNA, where it nucleates assembly of the 50S subunit. The protein is Large ribosomal subunit protein uL3 of Shouchella clausii (strain KSM-K16) (Alkalihalobacillus clausii).